Consider the following 90-residue polypeptide: MDVSSKVVVQVLLLALVVQVTLCQHWSYGWLPGGKRSVGELEATIRMMGTGRVVSLPEDASAQTQERLRQYNLINDGSTYFDRKKRFMSQ.

Residues 1-23 form the signal peptide; sequence MDVSSKVVVQVLLLALVVQVTLC. Q24 is modified (pyrrolidone carboxylic acid). G33 carries the post-translational modification Glycine amide.

The protein belongs to the GnRH family. As to expression, expressed in neuron cell bodies of the nucleus olfactoretinalis.

It is found in the secreted. Stimulates the secretion of gonadotropins. This Oryzias latipes (Japanese rice fish) protein is Progonadoliberin-3 (gnrh3).